A 394-amino-acid polypeptide reads, in one-letter code: N-acetylgalactosamine-6-phosphate deacetylase (394 aa).

Glu-137 provides a ligand contact to Zn(2+). A substrate-binding site is contributed by 148-149 (CH). 2 residues coordinate Zn(2+): His-201 and His-222. Substrate contacts are provided by residues 225-226 (NG), Arg-233, and 254-257 (DGQH). The active-site Proton donor/acceptor is the Asp-280. 313–315 (LAG) contacts substrate.

Belongs to the metallo-dependent hydrolases superfamily. NagA family.

It localises to the cytoplasm. It catalyses the reaction N-acetyl-D-galactosamine 6-phosphate + H2O = D-galactosamine 6-phosphate + acetate. The catalysed reaction is N-acetyl-D-glucosamine 6-phosphate + H2O = D-glucosamine 6-phosphate + acetate. Functionally, involved in the pathway of N-acetyl-D-galactosamine degradation. Catalyzes the conversion of N-acetyl-D-galactosamine 6-phosphate to D-galactosamine 6-phosphate and acetate. It can also catalyze the conversion of N-acetyl-D-glucosamine 6-phosphate. The protein is N-acetylgalactosamine-6-phosphate deacetylase of Shewanella sp. (strain ANA-3).